The chain runs to 356 residues: S-adenosylmethionine:tRNA ribosyltransferase-isomerase (356 aa).

Belongs to the QueA family. Monomer.

It localises to the cytoplasm. The enzyme catalyses 7-aminomethyl-7-carbaguanosine(34) in tRNA + S-adenosyl-L-methionine = epoxyqueuosine(34) in tRNA + adenine + L-methionine + 2 H(+). Its pathway is tRNA modification; tRNA-queuosine biosynthesis. Functionally, transfers and isomerizes the ribose moiety from AdoMet to the 7-aminomethyl group of 7-deazaguanine (preQ1-tRNA) to give epoxyqueuosine (oQ-tRNA). The sequence is that of S-adenosylmethionine:tRNA ribosyltransferase-isomerase from Escherichia coli O81 (strain ED1a).